Reading from the N-terminus, the 401-residue chain is Tumor necrosis factor receptor superfamily member 11B (401 aa).

A signal peptide spans Met1–Gln21. TNFR-Cys repeat units follow at residues Phe24–Cys62, Cys65–Cys105, Cys107–Cys142, and Cys145–Cys185. 8 cysteine pairs are disulfide-bonded: Cys41-Cys54, Cys44-Cys62, Cys65-Cys80, Cys83-Cys97, Cys87-Cys105, Cys107-Cys118, Cys124-Cys142, and Cys145-Cys160. A glycan (N-linked (GlcNAc...) asparagine) is linked at Asn98. 2 N-linked (GlcNAc...) asparagine glycosylation sites follow: Asn165 and Asn178. Cysteines 166 and 185 form a disulfide. 2 Death domains span residues Asp198–Lys269 and Ile270–Leu365. N-linked (GlcNAc...) asparagine glycosylation occurs at Asn289.

Homodimer. Interacts with TNFSF10 and TNFSF11.

It is found in the secreted. Acts as a decoy receptor for TNFSF11/RANKL and thereby neutralizes its function in osteoclastogenesis. Inhibits the activation of osteoclasts and promotes osteoclast apoptosis in vitro. Bone homeostasis seems to depend on the local ratio between TNFSF11 and TNFRSF11B. May also play a role in preventing arterial calcification. May act as decoy receptor for TNFSF10/TRAIL and protect against apoptosis. TNFSF10/TRAIL binding blocks the inhibition of osteoclastogenesis. This Rattus norvegicus (Rat) protein is Tumor necrosis factor receptor superfamily member 11B (Tnfrsf11b).